The sequence spans 632 residues: MAU2 chromatid cohesion factor homolog (632 aa).

TPR repeat units lie at residues 453-486 (GGFYYVQGLHAFHKNSFHEAKRFLRETLKMANAE) and 493-526 (SCSLVLLSHVFLSIGNSKESMNMVTPAMQLASKI).

Belongs to the SCC4/mau-2 family. As to quaternary structure, interacts with Nipped-B to form the cohesin loading complex.

Its subcellular location is the nucleus. The protein localises to the nucleoplasm. Functionally, required for association of the cohesin complex with chromatin during interphase. Plays a role in sister chromatid cohesion and normal progression through prometaphase. The sequence is that of MAU2 chromatid cohesion factor homolog from Drosophila erecta (Fruit fly).